Consider the following 760-residue polypeptide: Cyclin-D-binding Myb-like transcription factor 1 (760 aa).

Positions methionine 1–glutamate 237 are interaction with CCND2. Residues valine 87–arginine 170 form a required for transcriptional activation region. A required for DNA-binding region spans residues valine 87–methionine 458. The tract at residues glycine 176 to histidine 760 is interaction with CCND1, CCND2 and CCND3. One can recognise a Myb-like 1 domain in the interval glycine 225–arginine 263. Residues lysine 268 to glutamine 333 form the HTH myb-type domain. Residues tryptophan 306–leucine 329 constitute a DNA-binding region (H-T-H motif). The region spanning tryptophan 339–lysine 388 is the Myb-like 2 domain. Disordered stretches follow at residues lysine 414 to serine 435 and isoleucine 738 to histidine 760. Positions alanine 459 to histidine 760 are required for transcriptional activation.

The protein belongs to the DMTF1 family. Interacts with the D-type cyclins CCND1, CCND2 and CCND3. Interaction with D-type cyclins may modulate transcriptional activation by this protein. In terms of processing, phosphorylated by the cyclin-D2/CDK4, cyclin-D3/CDK4 and cyclin-D2/CDK6 complexes and to a lesser extent by the cyclin-D1/CDK4 complex. As to expression, expressed at relatively low levels in colonic mucosa, ovary, peripheral leukocytes, prostate and small intestine, and at higher levels in spleen, testis and thymus. Expressed in multiple regions of the brain and CNS including amygdala, caudate, corpus callosum, hippocampus, substantia nigra and subthalamic nucleus. Isoform 1 is the predominant isoform in monocytes, macrophages and neutrophils, isoform 2 is most strongly expressed in peripheral blood leukocytes and quiescent CD34 positive cells, and isoform 3 is expressed at low levels in all hematopoietic cell types. Expression is frequently reduced in non-small-cell lung carcinomas (NSCLC) due to hemizygous gene deletion, strongly suggesting that this locus is haploinsufficient for tumor suppression. Loss of this locus frequently occurs in tumors which retain wild-type CDKN2A/ARF and p53/TP53 loci. Hemizygous gene deletion has also been observed in leukemic blasts from patients with abnormalities of the long arm of chromosome 7.

The protein localises to the nucleus. Transcriptional activator which activates the CDKN2A/ARF locus in response to Ras-Raf signaling, thereby promoting p53/TP53-dependent growth arrest. Binds to the consensus sequence 5'-CCCG[GT]ATGT-3'. Isoform 1 may cooperate with MYB to activate transcription of the ANPEP gene. Isoform 2 may antagonize transcriptional activation by isoform 1. This is Cyclin-D-binding Myb-like transcription factor 1 (DMTF1) from Homo sapiens (Human).